The primary structure comprises 257 residues: GTP cyclohydrolase FolE2 (257 aa).

It belongs to the GTP cyclohydrolase IV family.

The catalysed reaction is GTP + H2O = 7,8-dihydroneopterin 3'-triphosphate + formate + H(+). It participates in cofactor biosynthesis; 7,8-dihydroneopterin triphosphate biosynthesis; 7,8-dihydroneopterin triphosphate from GTP: step 1/1. Its function is as follows. Converts GTP to 7,8-dihydroneopterin triphosphate. The protein is GTP cyclohydrolase FolE2 of Kosmotoga olearia (strain ATCC BAA-1733 / DSM 21960 / TBF 19.5.1).